A 323-amino-acid chain; its full sequence is Cyclin-dependent kinase 1 (323 aa).

A Protein kinase domain is found at 4–306 (YQKIEKIGEG…AKQACMHPYF (303 aa)). ATP-binding positions include 10–18 (IGEGTYGVV) and Lys-34. A Phosphothreonine modification is found at Thr-14. Phosphotyrosine is present on Tyr-15. The active-site Proton acceptor is Asp-147. Thr-180 bears the Phosphothreonine; by CAK mark.

It belongs to the protein kinase superfamily. CMGC Ser/Thr protein kinase family. CDC2/CDKX subfamily. As to quaternary structure, forms a stable but non-covalent complex with a regulatory subunit (SUC1) and with a cyclin.

It carries out the reaction L-seryl-[protein] + ATP = O-phospho-L-seryl-[protein] + ADP + H(+). The catalysed reaction is L-threonyl-[protein] + ATP = O-phospho-L-threonyl-[protein] + ADP + H(+). Its activity is regulated as follows. Phosphorylation at Thr-14 or Tyr-15 inactivates the enzyme, while phosphorylation at Thr-180 activates it. Cyclin-dependent kinase that acts as a master regulator of the mitotic and meiotic cell cycles. The protein is Cyclin-dependent kinase 1 of Emericella nidulans (strain FGSC A4 / ATCC 38163 / CBS 112.46 / NRRL 194 / M139) (Aspergillus nidulans).